The chain runs to 437 residues: Histidine--tRNA ligase (437 aa).

It belongs to the class-II aminoacyl-tRNA synthetase family. Homodimer.

It localises to the cytoplasm. It catalyses the reaction tRNA(His) + L-histidine + ATP = L-histidyl-tRNA(His) + AMP + diphosphate + H(+). The sequence is that of Histidine--tRNA ligase from Opitutus terrae (strain DSM 11246 / JCM 15787 / PB90-1).